Reading from the N-terminus, the 143-residue chain is Nucleoside diphosphate kinase (143 aa).

Lysine 11, phenylalanine 59, arginine 87, threonine 93, arginine 104, and asparagine 114 together coordinate ATP. Histidine 117 serves as the catalytic Pros-phosphohistidine intermediate.

The protein belongs to the NDK family. As to quaternary structure, homotetramer. It depends on Mg(2+) as a cofactor.

Its subcellular location is the cytoplasm. The enzyme catalyses dZDP + ATP = dZTP + ADP. It carries out the reaction a 2'-deoxyribonucleoside 5'-diphosphate + ATP = a 2'-deoxyribonucleoside 5'-triphosphate + ADP. The catalysed reaction is a ribonucleoside 5'-diphosphate + ATP = a ribonucleoside 5'-triphosphate + ADP. Its pathway is purine metabolism. In terms of biological role, major role in the synthesis of nucleoside triphosphates other than ATP. The ATP gamma phosphate is transferred to the NDP beta phosphate via a ping-pong mechanism, using a phosphorylated active-site intermediate. Its function is as follows. (Microbial infection) Catalyzes the phosphorylation of dZDP to dZTP, when the bacterium is infected by a phage that produces the substrate for the synthesis of dZTP (2- amino-2'-deoxyadenosine 5'-triphosphate), which is then used by the phage as a DNA polymerase substrate. The protein is Nucleoside diphosphate kinase of Acinetobacter baumannii (strain AB307-0294).